The chain runs to 275 residues: Adenosylcobinamide-GDP ribazoletransferase (275 aa).

6 helical membrane passes run V52–G72, V73–M93, M126–V146, F181–L201, V208–A228, and I251–A271.

The protein belongs to the CobS family. The cofactor is Mg(2+).

Its subcellular location is the cell membrane. The enzyme catalyses alpha-ribazole + adenosylcob(III)inamide-GDP = adenosylcob(III)alamin + GMP + H(+). It catalyses the reaction alpha-ribazole 5'-phosphate + adenosylcob(III)inamide-GDP = adenosylcob(III)alamin 5'-phosphate + GMP + H(+). It functions in the pathway cofactor biosynthesis; adenosylcobalamin biosynthesis; adenosylcobalamin from cob(II)yrinate a,c-diamide: step 7/7. In terms of biological role, joins adenosylcobinamide-GDP and alpha-ribazole to generate adenosylcobalamin (Ado-cobalamin). Also synthesizes adenosylcobalamin 5'-phosphate from adenosylcobinamide-GDP and alpha-ribazole 5'-phosphate. This Corynebacterium efficiens (strain DSM 44549 / YS-314 / AJ 12310 / JCM 11189 / NBRC 100395) protein is Adenosylcobinamide-GDP ribazoletransferase.